A 1073-amino-acid polypeptide reads, in one-letter code: Ubiquitin carboxyl-terminal hydrolase 53 (1073 aa).

A USP domain is found at 30–351 (KGLLNEPGQN…QPLLLFYANP (322 aa)). The Nucleophile role is filled by C41. 12 residues coordinate Zn(2+): H66, C68, C73, C76, H132, C144, C149, H152, C165, C168, C224, and C228. The active-site Proton acceptor is H301. Disordered regions lie at residues 391 to 437 (LKEN…HIDQ) and 485 to 636 (LSHF…PKQK). The segment covering 407 to 418 (KFPTDNISSSNR) has biased composition (polar residues). The span at 524 to 541 (QSRASAQIISSSKSQILA) shows a compositional bias: low complexity. Polar residues predominate over residues 553 to 563 (DNGTGYDTDSS). Positions 612 to 627 (NISNKPKSSKDPSFSN) are enriched in low complexity.

It belongs to the peptidase C19 family. As to quaternary structure, interacts (via the C-terminal region) with the heterodimer TJP1:TJP2. Expressed predominantly in skeletal muscle and heart.

The protein resides in the cell junction. Its subcellular location is the tight junction. It catalyses the reaction Thiol-dependent hydrolysis of ester, thioester, amide, peptide and isopeptide bonds formed by the C-terminal Gly of ubiquitin (a 76-residue protein attached to proteins as an intracellular targeting signal).. In terms of biological role, deubiquitinase that mediates 'Lys-63'-linked deubiquitination of tight junction proteins, such as MARVELD2 and LSR, and which is involved in the survival of auditory hair cells and hearing. Specifically cleaves 'Lys-63'-linked polyubiquitin chains composed of at least 3 ubiquitin molecules, while it is not able to deubiquitinate substrates with shorter ubiquitin chains: recognizes ubiquitin chain in position S2 and catalyzes en bloc cleavage of polyubiquitin chains from substrate proteins. Probably acts by modulating the barrier properties and mechanical stability of tight junctions via deubiquitination of MARVELD2 and LSR. The chain is Ubiquitin carboxyl-terminal hydrolase 53 from Homo sapiens (Human).